The sequence spans 110 residues: Inner membrane protein H108R (110 aa).

The chain crosses the membrane as a helical span at residues 10–32 (LIVIITILITTRELSTTMLIVSL).

Belongs to the asfivirus H108R family.

It localises to the virion membrane. The chain is Inner membrane protein H108R from African swine fever virus (isolate Pig/Kenya/KEN-50/1950) (ASFV).